The primary structure comprises 4835 residues: MSGYFTDLQNAEVLRAAESIVSSGQAVLLCGPSASGRTALLSHLASKLGAKPPIPLHLTTAQDTRDLIGSYVMTNKPGDFRFILGPLAYAAQSGRWISIEEITTISQDSLLLLSSVVNTRTLSVGSYQISVHPDFRIHAKTSADPALLSTIVKSMFYPLVLPPLGNHLFQVLTKHCNRGICTILAHIHVQFETHRLTAGRISASDMVKWARRIDLDLKNGGAVLNKAVQEASAGTAATTLVSWLDDNTRMVMIKNAWEAFVLRYSKEQTRRAFLDILRLSLNIHEELMLSTLLKIKVDIRHDYTQKRLVCGRVSLPFYESPDERSLDDICRTNHTTRLLEIISSAIRNNEPLLLVGPTGIGKTTCLQVIARALGKKLHVVNMSSQTDAADLLGGYVPATLDRILRNLYDAITGSLGLYISVRKNQIFVTELHKSYAEKDIAKFLANCETALSGMRQVLRKEVGEVVEQGSTEQRVSHDKKYARRGTYENSLYFLQSLGDTLEQATELHKILCHEVETKKPTMAFKYQEGLLVQALVKGDWILIDEINLASYDLLDVISQLVNPEHNEIAIPDKGFVAKNPHFRVFAAMNPGSDVGKKDLPPTIRRCFTEINVSEMSDDVDIVALTKSYLRMDDAMIEDRQGLDPNVVYQLFTVLKARAKTDLVTAAEAKSPCFSLRSLCRALSFAHRFRAAAGLRRSMYEGFMLAFGSMLNEKSRQAVHALILDKLLNGNKEYLLNPFIIQPFNKPCTAMIFQATTKDEAVTVEYQEPQAAHGFLEEEKSRARSTDYVLTKSTRSYMTTISRAIAAQLPILLEGTTSSGKTSLIKHIAKQFGCPITRINNHEHTDLSEYFGSYQPDPLTGQLVFKDGPLVTGMKQGHWVILDELNMASSEILEALNRLLDDNRELLVPDTQEIVRPAPGFLLFATQNPSGSYAGRKMLSEAFQNRFIMIEFADISTEELKEILINRSTSRHLAPQYCEKLITTIQAIKMQLSHRNNNAVMTNALITLRDLFRVADRLPRTLTELAMGIFELIGERQRDPADKQLVAEIIAKNLGLKTFSVSAAEQEYAIRVRPIQSMIEKALKAGADSPKSAFLLKFQDIVWTPSMIRLFALLFTSVSNGESPLLVGVSGAGKTTSVELIAAIMAQQLVQVNLHKHTESADFIGSLRPLRSRESMHAHLSVLKEYAATTTNVDKAVYAEIKRLETTLGTKLFEWEDGPILNCMKRGHILLLDEVSLADESVLERLNSVLETSRELTVAENPNMPRPVIAHTGFKLIATMNPAGDYGKKELSPAMRSRLTEFWMPHIRDINEVRMILTRKLQKTAIYRLGHQQGLDVVSLLADFFAEMDRITQSGRLGDVFTLSIRDILAVCDYITEVQTKEGTELGQMLIDAVTLSILDGLPVRTQLGNMPACREVKHEMVLYLANRILSANLTDIDLIQDLTVSISKDTNELTFLQASTQTVLATIPPGPQYNHAKALRKMTSFRLDAPTTIKNACRIAKALRFQRPILLEGDPGVGKSALVSAIAEICGYSLVRINLSEQTDLSDLLGSDLPAENGFRWVDGVLLKAVKEGAFILLDELNLANQTVLEGLNSLLDHRRSLFIPELMLSVKSPDTLRIFGTQNPRSQGSGRKGLPQSFINRFLNVYVDVLKSQDYDWILSNLFTDIPTYVLDYILGSTKQLRAGLEELKFGISGGPWELNVRDMMRLCDMLTTTPGLAQGITLAHAKHYAHILFGYRFRTADDDAYVQNVLFSPHSLDSVAEATQSHHWYSLRPLWNVTEDVVKIGSLAIPRIDPVFRDVLGTKLSYAHTSCFLTAQLVALEALAVAVTQNLSCILVGSPESGKSSILRTLADVVRQPLVHISASTATDVSDLIGAYEQVDVLYDLKSVIRDLCLFVHSLPIKASYSAISFSEFLKDLTASLDREIGDGLGSKSRAISMESIVSEVVQKLLLEFMAKFSPDLDSGGLAAKNFSLFCSEILTQDTTPVDERFSPHMPTIPELCKSMASLYLSTQQSQTGRFVWRDSELIRALERGYWVELTNANFCMPSVLDRLNSLLERGGGLEILEQGLEETRSIKVHPNFRLFISYAPTSDISRALRNRSLELSIDIQVSHYNLLDIVRCVYTSSTASGVSLDPYLIKLVSLVYFELSRDNPEIVGLGLLFKWLKLLVTYHKRFSTSVGDPKAVSSWVDRSFSSVFIASTLNADLHRQYMQVYQNARLALQGDGSLEACTLVEAAAVLNQLTLGAVRKLSISNSLQHSLALLELRTTVKPLDQLVSLADQEPQIMEPFSQVSGWLAICVGHSLDFQHHKELVSNLLTSTDINPMYLLTPPEPSSQALLKYISQGYLDMYSSPDSIIHQVIKYVSLCSPFYASILKLFIEGKFTTKDSYLLLYLIELSQHLATDPNNYDYVALFFSLFELLISHSIDPSTKTYSLGQRQVMRTFFDMILTDQYFESMPRLLSGYIRSLFISAARNDLETAWLAVRKNLALARISVHYLPELFKVFRYVIERLNLCISPEGVVFLQEGLSDSITASLWKDILATVIYMACRADDQTGDYVPKLAILQDSANRIDLCASKLSGNQHPTARALAQMQSLFLLFTGKAFCMQVSDTLEGWSQRDLTTQLPILLFRSMSFYHRNAAGPITYLRGPIFVSTGEFVTSSLSVPALLTNAIEEQATSVLKSLLCRSEDFLSYVGNVINSITTIVLRLFFAALEREAPSCDFTDGSFQLFALILETIVHSSNPLLASLTQGVEDILKAIISVQLSPSPLLLSGLVLTVASLVLYLLTSIANQRDPIVMTKHREVLYRRLAKLIATSIEDSKLHALFVFGDGALSESSSIYKELSTLYNSYAEAADQYAAELLVRADDEDNTFFEDLSSQLASLDGFEVHVLTFVSGVLNLEKVLQMHESTECIEAILDGLAVAERQISTTLAALLPRLINYTVESSYYLDMTIPIASFLMCLRVGLSAVISSVYAHVCDAINAARRLSSEGIGLQITLQDLLLLIQRVVVGTGDEFLDLLCYDKFIRSCCSSKTVSTLHVARLFTLSLLQYSSCSKGVQGDVSQFLLADTLRPERVSSIAAQFEIEEARSYRKYIADHSIFKTRNQSSTAEGVSEEDELKTQIAALFPKNDSHFIKSDTSSDDEQPISMSAQTKVDYDDAYATSFFTRMNMILIIGNCILHLYTSDTEALPIQERLQNLSSILQAHVPHLSRPLVALQAVTYALSICAGGVSSNLSIRSPLTPETDRLMYPLVTGATMGLVRVLSSRSPNVDYAKLQTGKTRRAIHCEDIYSRPYPYETAEFCSTLLRKIIVRTQHLLTEWPDNVQLLDIMHVCDKLMELPVLEAPLVMFLTGAEVLVRHLETWDKGAPAVYKYVTNPNVPVPESLTKSLIHLMVTWRRVELMSWNGFFSRVHTQFSNVSLTYWPELLIASLTYQRSVTQGEPSTEAYYAQMREFLYESNVGEFPVRLKLLYTLSALLSNIEELAEPELVSSPHKTMTSAVLFSIASEAVEFAKYMNKEFEEEAAQIKKRFEDQIRIFEWNERSSYTSWLTAQNSHRLCTKIIREYTEVLQHATRAFHMGYSATYDRIPLSVTVQEYLPLSSESGMLPPALSQELVERLNYCVEQMCHGRKESETLKRNEKNRLLSDVLDVLKETLGCVLSSGFAFKQSFGWKLAHLCLPSVHSTFELMHMFHDSLCQRCNEVEPHDIERMKRIIACLNQVFVQLSELVVELADIELLSRVMRTAPTGSSKSQADSVLYVYLADNSVPQLLTTQVMSHVTKAHKMCMSLQEFLIGLPLDSCKSSPTKLHEQIGGFLERFSADSVTALNRIKIFSKFSALIKRLCSITLIPLAFFEEAKAILQQILADLSPIFSALIAVLPTAPISTFVTEHAKYLAQVTEVIDTLTETAAQCRVEEAATVSSIEWPYFALPFASVGEEGLSVEIIVDNAKKQVSAYMTAFFTSTLQPILQCATRHVVSLPVLPQKLLCQIETLKGDMQALADVLAKFIGPLISGAIALLRTGFHCHVDDDQKETDNDNQSGLGLGDGTGDQNVSKEAAKELCEDDLMGNQNDRDQQEQQEKDGDDEAIEMQNDFGGMSESLHHDIEEEDSNGSDEEEVLEKEMGDEQGEAIDERNYNEDDDSAEEYSDEQKKNTNNNNDTMELAAQEKDQDSINSELSDPSGEQHEEQADATGSTDEQAQEDDYNDLDDKNLSGQSDLSVPEADGEDETVNEELEEEQQQMSDLSNPDQDACAIEEDDDRDLPSSDENAEEHDEHEAPVDIDDNEASDEQSTYNDNDRDDAINISAQQQATNDEEEMQKDTEYDQENITDSNPDANEVGTNDQKQTHEDNDQFRQENIEDQWEAESTENSQGEGAESADLKEGNPDMSLEEFQRIWKERLNIHDRESEKDEAAEPQDMPLQSNKTVEFDDSKSGRDGALGLTESKHRNLTNQEFDNPNEERNVEHNSSCETSQSSHDRPPAEHLNPEISDEGEESSTASDKQEQAVLSHMRESSKDLLNPEGEVYQELAVSLASEETKRAPEDVAAASARGNHLLLDLIKQTSAAAFSLAERLRIILEPTVTSDLKGDFRTGKKLNLRRIIPFIASEFQKDKIWLRRTKPSKRVYQVLLAVDDSSSMAPIAKYALQAITLLFNACKFLEVGQLSVFSFGQKFELLLPITDQYNDASLAYAIGSFTFAQNETRVSDAISIASDYLDSVRFFKGSDSALQLLLMISDGRLKEKGGVAREIRKCMGRGQLPVLIVLDTDKKSIMDIKSVSFITDSSGKRVRQTSMYLDDFPFQCYALLRHIEDLPETLVAVIKRWIESVSVYNAV.

AAA-ATPase protomer regions lie at residues 12–161 (EVLR…PLVL), 324–689 (RSLD…HRFR), 797–1049 (MTTI…AEII), 1096–1375 (KFQD…DYIT), 1489–1738 (APTT…FGYR), and 1821–2110 (ALEA…SIDI). Residues 31 to 38 (GPSASGRT), 356 to 363 (GPTGIGKT), 814 to 821 (GTTSSGKT), 1127 to 1134 (GVSGAGKT), 1513 to 1520 (GDPGVGKS), and 1839 to 1846 (GSPESGKS) contribute to the ATP site. The interval 2197–4058 (SVFIASTLNA…DGTGDQNVSK (1862 aa)) is linker. 2 disordered regions span residues 4033-4056 (DQKE…DQNV) and 4108-4523 (IEEE…LLNP). Acidic residues-rich tracts occupy residues 4109–4133 (EEED…QGEA), 4141–4150 (EDDDSAEEYS), 4226–4241 (ADGE…EEEQ), 4282–4291 (VDIDDNEASD), and 4315–4330 (NDEE…DQEN). Residues 4331 to 4346 (ITDSNPDANEVGTNDQ) are compositionally biased toward polar residues. Composition is skewed to basic and acidic residues over residues 4347 to 4360 (KQTH…RQEN), 4394 to 4415 (EFQR…KDEA), and 4429 to 4438 (VEFDDSKSGR). The span at 4468-4477 (HNSSCETSQS) shows a compositional bias: polar residues. Residues 4478-4488 (SHDRPPAEHLN) show a composition bias toward basic and acidic residues. Residues 4629–4818 (QVLLAVDDSS…RHIEDLPETL (190 aa)) form the VWFA domain.

This sequence belongs to the midasin family. In terms of assembly, associates with pre-60S ribosomes in the nucleoplasm.

It is found in the nucleus. It localises to the nucleolus. The protein localises to the nucleoplasm. In terms of biological role, nuclear chaperone required for maturation and nuclear export of pre-60S ribosome subunits. Functions at successive maturation steps to remove ribosomal factors at critical transition points, first driving the exit of early pre-60S particles from the nucleolus and then driving late pre-60S particles from the nucleus. In Giardia intestinalis (Giardia lamblia), this protein is Midasin (MDN1).